An 89-amino-acid polypeptide reads, in one-letter code: Small ribosomal subunit protein uS15 (89 aa).

Belongs to the universal ribosomal protein uS15 family. Part of the 30S ribosomal subunit. Forms a bridge to the 50S subunit in the 70S ribosome, contacting the 23S rRNA.

In terms of biological role, one of the primary rRNA binding proteins, it binds directly to 16S rRNA where it helps nucleate assembly of the platform of the 30S subunit by binding and bridging several RNA helices of the 16S rRNA. Functionally, forms an intersubunit bridge (bridge B4) with the 23S rRNA of the 50S subunit in the ribosome. The protein is Small ribosomal subunit protein uS15 of Chlorobium limicola (strain DSM 245 / NBRC 103803 / 6330).